Reading from the N-terminus, the 85-residue chain is Small ribosomal subunit protein bS20 (85 aa).

Positions 1–22 (MPQIKSAIKRVKTQNATNKRNA) are disordered. A compositionally biased stretch (polar residues) spans 13-22 (TQNATNKRNA).

It belongs to the bacterial ribosomal protein bS20 family.

Binds directly to 16S ribosomal RNA. In Lactobacillus acidophilus (strain ATCC 700396 / NCK56 / N2 / NCFM), this protein is Small ribosomal subunit protein bS20.